Consider the following 860-residue polypeptide: Photoactivated adenylate cyclase subunit beta (860 aa).

One can recognise a BLUF 1 domain in the interval 56-149 (LRRLMYLSKS…GRMYGDWHMK (94 aa)). The 129-residue stretch at 205-333 (VVTFIYLVEF…DCINTTSRIA (129 aa)) folds into the Guanylate cyclase 1 domain. The interval 420-443 (RPPIFDDTPKGKPRPRTPGYGGRQ) is disordered. Residues 471–563 (LTTLTYISQA…RAYPAEWTLT (93 aa)) enclose the BLUF 2 domain. The Guanylate cyclase 2 domain maps to 619 to 748 (VMLATDICSF…AVSARVMEVE (130 aa)). A disordered region spans residues 819–860 (KPLALEPEEAKQDYRVSPGRMRHGDSGRRSNSAQGKRSTQVR). The segment covering 847 to 860 (RSNSAQGKRSTQVR) has biased composition (polar residues).

This sequence belongs to the adenylyl cyclase class-4/guanylyl cyclase family. Heterotetramer of two alpha and two beta subunits. The cofactor is FAD.

The protein localises to the cell projection. Its subcellular location is the cilium. It localises to the flagellum. It carries out the reaction ATP = 3',5'-cyclic AMP + diphosphate. Its function is as follows. Acts as a photoreceptor for the step-up photophobic response. The chain is Photoactivated adenylate cyclase subunit beta from Euglena longa (Euglenophycean alga).